The chain runs to 323 residues: NAC transcription factor 25 (323 aa).

An NAC domain is found at 16-177; it reads LPPGFRFHPT…DWVLCRIYKK (162 aa). Residues 114 to 183 mediate DNA binding; the sequence is VGVKKALVFY…IYKKNSSQRP (70 aa). Residues 201-221 are compositionally biased toward low complexity; the sequence is KSSANSSSTSVLDNNDNNNNN. The segment at 201–223 is disordered; that stretch reads KSSANSSSTSVLDNNDNNNNNNE.

In terms of tissue distribution, expressed specifically in the tapetum.

It localises to the nucleus. Functionally, transcription factor of the NAC family. May be associated with anther development and pollen production. Required for normal seed development and morphology. This is NAC transcription factor 25 (NAC025) from Arabidopsis thaliana (Mouse-ear cress).